Here is a 511-residue protein sequence, read N- to C-terminus: 2-isopropylmalate synthase (511 aa).

Residues 5–267 form the Pyruvate carboxyltransferase domain; the sequence is IQIFDTTLRD…QTQINLEETK (263 aa). Mn(2+) is bound by residues aspartate 14, histidine 202, histidine 204, and asparagine 238. The tract at residues 391 to 511 is regulatory domain; sequence KVETLQLQFV…NTKVEEGIHS (121 aa).

The protein belongs to the alpha-IPM synthase/homocitrate synthase family. LeuA type 1 subfamily. Homodimer. It depends on Mn(2+) as a cofactor.

Its subcellular location is the cytoplasm. It catalyses the reaction 3-methyl-2-oxobutanoate + acetyl-CoA + H2O = (2S)-2-isopropylmalate + CoA + H(+). It functions in the pathway amino-acid biosynthesis; L-leucine biosynthesis; L-leucine from 3-methyl-2-oxobutanoate: step 1/4. Catalyzes the condensation of the acetyl group of acetyl-CoA with 3-methyl-2-oxobutanoate (2-ketoisovalerate) to form 3-carboxy-3-hydroxy-4-methylpentanoate (2-isopropylmalate). The sequence is that of 2-isopropylmalate synthase from Staphylococcus saprophyticus subsp. saprophyticus (strain ATCC 15305 / DSM 20229 / NCIMB 8711 / NCTC 7292 / S-41).